The sequence spans 836 residues: Neuroligin-2 (836 aa).

Positions 1–14 (MWLLALCLVGLAGA) are cleaved as a signal peptide. Residues 15-678 (QRGGGGPGGG…DSRDYSTELS (664 aa)) are Extracellular-facing. N-linked (GlcNAc...) asparagine glycosylation is found at Asn-98 and Asn-136. Intrachain disulfides connect Cys-106-Cys-141, Cys-317-Cys-328, and Cys-487-Cys-521. Residue Asn-522 is glycosylated (N-linked (GlcNAc...) asparagine). The tract at residues 623–661 (PPYATRWPPRTPGPGTSGTRRPPPPATLPPESDIDLGPR) is disordered. Residues 679 to 699 (VTVAVGASLLFLNILAFAALY) form a helical membrane-spanning segment. The segment at 679–699 (VTVAVGASLLFLNILAFAALY) is required for interaction with LHFPL4. At 700-836 (YKRDRRQELR…LPHPHSTTRV (137 aa)) the chain is on the cytoplasmic side. 2 disordered regions span residues 711 to 735 (RRLS…TAGR) and 791 to 836 (LLPS…TTRV). Ser-714 and Ser-719 each carry phosphoserine. A compositionally biased stretch (gly residues) spans 717 to 728 (GGSGSGVPGGGP). Over residues 796-819 (LGPPPPPPPPSLHPFGPFPPPPPT) the composition is skewed to pro residues. The span at 824-836 (NNTLPHPHSTTRV) shows a compositional bias: polar residues.

The protein belongs to the type-B carboxylesterase/lipase family. As to quaternary structure, interacts with neurexins NRXN1, NRXN2 and NRXN3. Interaction with neurexins is mediated by heparan sulfate glycan modification on neurexin. Interacts (via its C-terminus) with DLG4/PSD-95 (via PDZ domain 3). Interacts with PATJ. Interacts with MDGA2. Interacts with GPHN. Interacts with MDGA1. Found in a complex with MAGI2 and IGSF9B, where it interacts with MAGI2 (via WW 1, WW 2 and PDZ 2 domains). Identified in a complex of 720 kDa composed of LHFPL4, NLGN2, GABRA1, GABRB2, GABRG2 and GABRB3. Interacts with LHFPL4; leading to mutual regulation of the protein level and synaptic clustering. Interacts with GABRA1. In terms of tissue distribution, brain and arteries. Detected in the retina outer plexiform layer (at protein level). Widely expressed. Detected in heart, brain, spleen, lung, liver, skeletal muscle, kidney and testis.

The protein localises to the cell membrane. It localises to the postsynaptic cell membrane. It is found in the presynaptic cell membrane. Its function is as follows. Transmembrane scaffolding protein involved in cell-cell interactions via its interactions with neurexin family members. Mediates cell-cell interactions both in neurons and in other types of cells, such as Langerhans beta cells. Mediates cell-cell interactions between Langerhans beta cells and modulates insulin secretion. Plays a role in synapse function and synaptic signal transmission, especially via gamma-aminobutyric acid receptors (GABA(A) receptors). Functions by recruiting and clustering synaptic proteins. Promotes clustering of postsynaptic GABRG2 and GPHN. Promotes clustering of postsynaptic LHFPL4. Modulates signaling by inhibitory synapses, and thereby plays a role in controlling the ratio of signaling by excitatory and inhibitory synapses and information processing. Required for normal signal amplitude from inhibitory synapses, but is not essential for normal signal frequency. May promote the initial formation of synapses, but is not essential for this. In vitro, triggers the de novo formation of presynaptic structures. In Mus musculus (Mouse), this protein is Neuroligin-2 (Nlgn2).